The chain runs to 214 residues: MEEDLLGICGFDSSKKYRLEELAKYQSGSCIEFEDDDEMAVDYPCPFCSDDYDLVELCHHIDEEHQLDANNGICPVCSRRVKMHMVDHITTQHRDVFKRLYKDESYSAFSPGTRKYLQSLIDEPLSTNHTSKSVLDPLLSFIYNPPSPKKSKLVQPDSSSEASMEDNSLIRDSTEKDWESPSPLSDTELLEKAKKREFVQGLISSAIFDHIYNF.

The residue at position 110 (serine 110) is a Phosphoserine. The segment at 148–185 is disordered; the sequence is PKKSKLVQPDSSSEASMEDNSLIRDSTEKDWESPSPLS. The span at 156 to 166 shows a compositional bias: polar residues; it reads PDSSSEASMED. Over residues 168–179 the composition is skewed to basic and acidic residues; it reads SLIRDSTEKDWE.

The protein belongs to the Di19 family. In terms of processing, phosphorylated in vitro by CPK3 or CPK11. Expressed in seedlings, roots, leaves, stems, flowers and siliques.

The protein resides in the nucleus. This is Protein DEHYDRATION-INDUCED 19 homolog 5 (DI19-5) from Arabidopsis thaliana (Mouse-ear cress).